The sequence spans 3420 residues: Adhesin BmaC autotransporter (3420 aa).

Residues 1 to 72 form the signal peptide; sequence MPNLANQDFT…SLVMAGTAAA (72 aa). Positions 3138–3420 constitute an Autotransporter domain; sequence GPSGNNGIWA…AGSVGLRVRW (283 aa).

It is found in the cell surface. Its subcellular location is the cell outer membrane. In terms of biological role, fibronectin-binding protein, which is involved in adhesion to host cells and in the infective process. Mediates the binding of B.suis to the extracellular matrix and to non-phagocytic cells via cell-associated fibronectin. The chain is Adhesin BmaC autotransporter from Brucella suis biovar 1 (strain 1330).